Reading from the N-terminus, the 140-residue chain is Perlin matrix protein (140 aa).

Residues 1 to 26 (MTCTLRLTVAALVLLGICHLSRPVAA) form the signal peptide.

The protein belongs to the N16 matrix protein family. In terms of assembly, heterooligomer; disulfide-linked. Pif97, Pif80, N16 and other proteins form a complex. Component of conchiolin, the organic matrix of nacre. Only expressed in the dorsal region of the mantle.

The protein localises to the secreted. It localises to the extracellular space. The protein resides in the extracellular matrix. In terms of biological role, may be specifically involved in the formation of the nacreous layer. The sequence is that of Perlin matrix protein from Margaritifera margaritifera (Freshwater pearl mussel).